The sequence spans 469 residues: 3-isopropylmalate dehydratase large subunit (469 aa).

[4Fe-4S] cluster contacts are provided by Cys350, Cys410, and Cys413.

The protein belongs to the aconitase/IPM isomerase family. LeuC type 1 subfamily. In terms of assembly, heterodimer of LeuC and LeuD. [4Fe-4S] cluster is required as a cofactor.

It catalyses the reaction (2R,3S)-3-isopropylmalate = (2S)-2-isopropylmalate. The protein operates within amino-acid biosynthesis; L-leucine biosynthesis; L-leucine from 3-methyl-2-oxobutanoate: step 2/4. Catalyzes the isomerization between 2-isopropylmalate and 3-isopropylmalate, via the formation of 2-isopropylmaleate. This is 3-isopropylmalate dehydratase large subunit from Agrobacterium fabrum (strain C58 / ATCC 33970) (Agrobacterium tumefaciens (strain C58)).